We begin with the raw amino-acid sequence, 333 residues long: METSKLFLLSSSLLLVLLATRPCPSLSERCNPKDKKVLLQIKKALDNPYILASWNPNTDCCGWYCVECDLTTHRINSLTIFSGQLSGQIPDAVGDLPFLETLIFRKLSNLTGQIPPAIAKLKHLKMVRLSWTNLSGPVPAFFSELKNLTYLDLSFNNLSGPIPGSLSLLPNLGALHLDRNHLTGPIPDSFGKFAGSTPGLHLSHNQLSGKIPYSFRGFDPNVMDLSRNKLEGDLSIFFNANKSTQIVDFSRNLFQFDLSRVEFPKSLTSLDLSHNKIAGSLPEMMTSLDLQFLNVSYNRLCGKIPVGGKLQSFDYDSYFHNRCLCGAPLQSCK.

The first 27 residues, 1-27, serve as a signal peptide directing secretion; sequence METSKLFLLSSSLLLVLLATRPCPSLS. 2 disulfides stabilise this stretch: Cys-30–Cys-60 and Cys-61–Cys-68. LRR repeat units follow at residues 72-96, 97-120, 121-144, 145-169, 170-192, 194-220, 221-240, 241-263, 264-288, and 290-312; these read THRINSLTIFSGQLSGQIPDAVGDL, PFLETLIFRKLSNLTGQIPPAIAK, LKHLKMVRLSWTNLSGPVPAFFSE, LKNLTYLDLSFNNLSGPIPGSLSLL, PNLGALHLDRNHLTGPIPDSFGK, AGSTPGLHLSHNQLSGKIPYSFRGFDP, NVMDLSRNKLEGDLSIFFNA, NKSTQIVDFSRNLFQFDLSRVEF, PKSLTSLDLSHNKIAGSLPEMMTSL, and LQFLNVSYNRLCGKIPVGGKLQS. N-linked (GlcNAc...) asparagine glycosylation is found at Asn-109, Asn-133, Asn-147, and Asn-157. The N-linked (GlcNAc...) asparagine glycan is linked to Asn-241. Asn-294 is a glycosylation site (N-linked (GlcNAc...) asparagine). 2 disulfides stabilise this stretch: Cys-301/Cys-323 and Cys-325/Cys-332.

Belongs to the polygalacturonase-inhibiting protein family.

It is found in the secreted. Its subcellular location is the cell wall. The protein localises to the membrane. Its function is as follows. Inhibitor of fungal polygalacturonase. It is an important factor for plant resistance to phytopathogenic fungi. The protein is Polygalacturonase inhibitor (pgip) of Vitis vinifera (Grape).